The primary structure comprises 318 residues: Beta-sarcoglycan (318 aa).

The segment at 1 to 32 (MAAAAAAAAEQQSSNGPVKKSMREKAVERRSV) is disordered. Topologically, residues 1–65 (MAAAAAAAAE…GLRGRKGNLA (65 aa)) are cytoplasmic. The segment covering 21–32 (SMREKAVERRSV) has biased composition (basic and acidic residues). A helical; Signal-anchor for type II membrane protein membrane pass occupies residues 66–86 (ICVIILLFILAVINLIITLVI). Over 87–318 (WAVIRIGPNG…ISDNPCGNTH (232 aa)) the chain is Extracellular. N-linked (GlcNAc...) asparagine glycans are attached at residues asparagine 158, asparagine 211, and asparagine 258. 2 cysteine pairs are disulfide-bonded: cysteine 288/cysteine 314 and cysteine 290/cysteine 307.

This sequence belongs to the sarcoglycan beta/delta/gamma/zeta family. Cross-link to form 2 major subcomplexes: one consisting of SGCB, SGCD and SGCG and the other consisting of SGCB and SGCD. The association between SGCB and SGCG is particularly strong while SGCA is loosely associated with the other sarcoglycans. In terms of processing, disulfide bonds are present. In terms of tissue distribution, highest expression in heart and skeletal muscle. Low expression in brain, kidney, placenta, pancreas and lung. High expression in fetal brain. Also found in fetal lung, kidney and liver.

It localises to the cell membrane. Its subcellular location is the sarcolemma. It is found in the cytoplasm. The protein localises to the cytoskeleton. In terms of biological role, component of the sarcoglycan complex, a subcomplex of the dystrophin-glycoprotein complex which forms a link between the F-actin cytoskeleton and the extracellular matrix. The protein is Beta-sarcoglycan (SGCB) of Homo sapiens (Human).